A 248-amino-acid polypeptide reads, in one-letter code: Endonuclease V (248 aa).

Mg(2+) contacts are provided by aspartate 54 and aspartate 118.

Belongs to the endonuclease V family. Mg(2+) is required as a cofactor.

It is found in the cytoplasm. It catalyses the reaction Endonucleolytic cleavage at apurinic or apyrimidinic sites to products with a 5'-phosphate.. In terms of biological role, DNA repair enzyme involved in the repair of deaminated bases. Selectively cleaves double-stranded DNA at the second phosphodiester bond 3' to a deoxyinosine leaving behind the intact lesion on the nicked DNA. The polypeptide is Endonuclease V (Natronomonas pharaonis (strain ATCC 35678 / DSM 2160 / CIP 103997 / JCM 8858 / NBRC 14720 / NCIMB 2260 / Gabara) (Halobacterium pharaonis)).